Consider the following 138-residue polypeptide: MNTIHVDVVSAEESIFSGEARFVALPGEAGELGIYPRHTPLITRIRPGAVRIEKADGTEEFVFVAGGLLEVQPNCVTVLSDTAIRGKDLDEAKATAAKALAEEALKNAKNDIDIAMAQSELAVMAAQIAALRKYRQKK.

Belongs to the ATPase epsilon chain family. In terms of assembly, F-type ATPases have 2 components, CF(1) - the catalytic core - and CF(0) - the membrane proton channel. CF(1) has five subunits: alpha(3), beta(3), gamma(1), delta(1), epsilon(1). CF(0) has three main subunits: a, b and c.

Its subcellular location is the cell inner membrane. In terms of biological role, produces ATP from ADP in the presence of a proton gradient across the membrane. The polypeptide is ATP synthase epsilon chain (Polaromonas naphthalenivorans (strain CJ2)).